Here is a 515-residue protein sequence, read N- to C-terminus: uncharacterized protein (515 aa).

The disordered stretch occupies residues 146–171; sequence SSEVDRNSETEGTREENSNTSDWDEQ. Residues 148 to 162 are compositionally biased toward basic and acidic residues; the sequence is EVDRNSETEGTREEN.

It localises to the cytoplasm. Its subcellular location is the nucleus. This is an uncharacterized protein from Schizosaccharomyces pombe (strain 972 / ATCC 24843) (Fission yeast).